A 137-amino-acid polypeptide reads, in one-letter code: Small ribosomal subunit protein uS12 (137 aa).

Residues 1-24 form a disordered region; it reads MPTINQLVRKGRRSQSSKSKAPAL. D102 bears the 3-methylthioaspartic acid mark.

Belongs to the universal ribosomal protein uS12 family. In terms of assembly, part of the 30S ribosomal subunit. Contacts proteins S8 and S17. May interact with IF1 in the 30S initiation complex.

Its function is as follows. With S4 and S5 plays an important role in translational accuracy. Functionally, interacts with and stabilizes bases of the 16S rRNA that are involved in tRNA selection in the A site and with the mRNA backbone. Located at the interface of the 30S and 50S subunits, it traverses the body of the 30S subunit contacting proteins on the other side and probably holding the rRNA structure together. The combined cluster of proteins S8, S12 and S17 appears to hold together the shoulder and platform of the 30S subunit. The polypeptide is Small ribosomal subunit protein uS12 (Pediococcus pentosaceus (strain ATCC 25745 / CCUG 21536 / LMG 10740 / 183-1w)).